The following is a 243-amino-acid chain: Protein S40-7 (243 aa).

Disordered stretches follow at residues Met-1 to Leu-68 and Ser-107 to Pro-143. The segment covering Ser-10 to Asp-20 has biased composition (polar residues). The segment covering Ala-22–Phe-32 has biased composition (acidic residues). Positions Pro-47–Gly-67 are enriched in polar residues.

The protein belongs to the senescence regulator S40 family.

The protein localises to the cytoplasm. This Arabidopsis thaliana (Mouse-ear cress) protein is Protein S40-7.